The primary structure comprises 146 residues: MKVLLLLAVVIMAFGSIQVQGSLLEFGQMILFKTGKRADVSYGFYGCHCGVGGRGSPKDATDWCCVTHDCCYNRLEKRGCGTKFLTYKFSYRGGQISCSTNQDSCRKQLCQCDKAAAECFARNKKSYSLKYQFYPNKFCKGKTPSC.

A signal peptide spans Met-1–Gly-21. 7 cysteine pairs are disulfide-bonded: Cys-47/Cys-139, Cys-49/Cys-65, Cys-64/Cys-119, Cys-70/Cys-146, Cys-71/Cys-112, Cys-80/Cys-105, and Cys-98/Cys-110. Residues His-48, Gly-50, and Gly-52 each coordinate Ca(2+). Residue His-68 is part of the active site. Residue Asp-69 participates in Ca(2+) binding. Asp-113 is an active-site residue.

This sequence belongs to the phospholipase A2 family. It depends on Ca(2+) as a cofactor.

It localises to the secreted. It is found in the cell membrane. The protein resides in the mitochondrion outer membrane. It carries out the reaction a 1,2-diacyl-sn-glycero-3-phosphoethanolamine + H2O = a 1-acyl-sn-glycero-3-phosphoethanolamine + a fatty acid + H(+). The enzyme catalyses 1-hexadecanoyl-2-(9Z-octadecenoyl)-sn-glycero-3-phosphoethanolamine + H2O = 1-hexadecanoyl-sn-glycero-3-phosphoethanolamine + (9Z)-octadecenoate + H(+). It catalyses the reaction 1-hexadecanoyl-2-(9Z,12Z-octadecadienoyl)-sn-glycero-3-phosphoethanolamine + H2O = 1-hexadecanoyl-sn-glycero-3-phosphoethanolamine + (9Z,12Z)-octadecadienoate + H(+). The catalysed reaction is 1-hexadecanoyl-2-(5Z,8Z,11Z,14Z-eicosatetraenoyl)-sn-glycero-3-phosphoethanolamine + H2O = 1-hexadecanoyl-sn-glycero-3-phosphoethanolamine + (5Z,8Z,11Z,14Z)-eicosatetraenoate + H(+). It carries out the reaction N-hexadecanoyl-1,2-di-(9Z-octadecenoyl)-sn-glycero-3-phosphoethanolamine + H2O = N-hexadecanoyl-1-(9Z-octadecenoyl)-sn-glycero-3-phosphoethanolamine + (9Z)-octadecenoate + H(+). The enzyme catalyses 1,2-dihexadecanoyl-sn-glycero-3-phospho-(1'-sn-glycerol) + H2O = 1-hexadecanoyl-sn-glycero-3-phospho-(1'-sn-glycerol) + hexadecanoate + H(+). It catalyses the reaction 1-hexadecanoyl-2-(9Z-octadecenoyl)-sn-glycero-3-phosphoglycerol + H2O = 1-hexadecanoyl-sn-glycero-3-phosphoglycerol + (9Z)-octadecenoate + H(+). The catalysed reaction is 1-hexadecanoyl-2-(9Z-octadecenoyl)-sn-glycero-3-phospho-(1'-sn-glycerol) + H2O = 1-hexadecanoyl-sn-glycero-3-phospho-(1'-sn-glycerol) + (9Z)-octadecenoate + H(+). It carries out the reaction a 1,2-diacyl-sn-glycero-3-phosphocholine + H2O = a 1-acyl-sn-glycero-3-phosphocholine + a fatty acid + H(+). The enzyme catalyses 1,2-dihexadecanoyl-sn-glycero-3-phosphocholine + H2O = 1-hexadecanoyl-sn-glycero-3-phosphocholine + hexadecanoate + H(+). It catalyses the reaction 1-hexadecanoyl-2-(9Z-octadecenoyl)-sn-glycero-3-phosphocholine + H2O = 1-hexadecanoyl-sn-glycero-3-phosphocholine + (9Z)-octadecenoate + H(+). The catalysed reaction is 1-hexadecanoyl-2-(9Z,12Z-octadecadienoyl)-sn-glycero-3-phosphocholine + H2O = (9Z,12Z)-octadecadienoate + 1-hexadecanoyl-sn-glycero-3-phosphocholine + H(+). It carries out the reaction 1-hexadecanoyl-2-(4Z,7Z,10Z,13Z,16Z,19Z-docosahexaenoyl)-sn-glycero-3-phosphocholine + H2O = (4Z,7Z,10Z,13Z,16Z,19Z)-docosahexaenoate + 1-hexadecanoyl-sn-glycero-3-phosphocholine + H(+). In terms of biological role, secretory calcium-dependent phospholipase A2 that primarily targets extracellular phospholipids with implications in host antimicrobial defense, inflammatory response and tissue regeneration. Hydrolyzes the ester bond of the fatty acyl group attached at sn-2 position of phospholipids (phospholipase A2 activity) with preference for phosphatidylethanolamines and phosphatidylglycerols over phosphatidylcholines. Contributes to lipid remodeling of cellular membranes and generation of lipid mediators involved in pathogen clearance. Displays bactericidal activity against Gram-positive bacteria by directly hydrolyzing phospholipids of the bacterial membrane. Upon sterile inflammation, targets membrane phospholipids of extracellular mitochondria released from activated platelets, generating free unsaturated fatty acids such as arachidonate that is used by neighboring leukocytes to synthesize inflammatory eicosanoids such as leukotrienes. Simultaneously, by compromising mitochondrial membrane integrity, promotes the release in circulation of potent damage-associated molecular pattern molecules that activate the innate immune response. Plays a stem cell regulator role in the intestinal crypt. Within intracellular compartment mediates Paneth cell differentiation and its stem cell supporting functions by inhibiting Wnt signaling pathway in intestinal stem cell (ICS). Secreted in the intestinal lumen upon inflammation, acts in an autocrine way and promotes prostaglandin E2 synthesis that stimulates Wnt signaling pathway in ICS cells and tissue regeneration. May play a role in the biosynthesis of N-acyl ethanolamines that regulate energy metabolism and inflammation. Hydrolyzes N-acyl phosphatidylethanolamines to N-acyl lysophosphatidylethanolamines, which are further cleaved by a lysophospholipase D to release N-acyl ethanolamines. Independent of its catalytic activity, acts as a ligand for integrins. Binds to and activates integrins ITGAV:ITGB3, ITGA4:ITGB1 and ITGA5:ITGB1. Binds to a site (site 2) which is distinct from the classical ligand-binding site (site 1) and induces integrin conformational changes and enhanced ligand binding to site 1. Induces cell proliferation in an integrin-dependent manner. In Rattus norvegicus (Rat), this protein is Phospholipase A2, membrane associated (Pla2g2a).